A 225-amino-acid chain; its full sequence is PKHD-type hydroxylase YbiX (225 aa).

A Fe2OG dioxygenase domain is found at T78–S177. H96, D98, and H158 together coordinate Fe cation. R168 contacts 2-oxoglutarate.

Requires Fe(2+) as cofactor. It depends on L-ascorbate as a cofactor.

This chain is PKHD-type hydroxylase YbiX, found in Escherichia coli (strain K12 / DH10B).